A 337-amino-acid polypeptide reads, in one-letter code: Putative tRNA (cytidine(32)/guanosine(34)-2'-O)-methyltransferase (337 aa).

The S-adenosyl-L-methionine site is built by Gly-53, Trp-55, Asp-76, Asp-92, and Asp-117. Residue Lys-157 is the Proton acceptor of the active site. Composition is skewed to basic and acidic residues over residues 304 to 318 (LKAELSRGKDQKKTP) and 327 to 337 (ELEKAAEKFQL). The segment at 304 to 337 (LKAELSRGKDQKKTPAENVPSVEELEKAAEKFQL) is disordered.

This sequence belongs to the class I-like SAM-binding methyltransferase superfamily. RNA methyltransferase RlmE family. TRM7 subfamily.

It is found in the cytoplasm. The catalysed reaction is cytidine(32)/guanosine(34) in tRNA + 2 S-adenosyl-L-methionine = 2'-O-methylcytidine(32)/2'-O-methylguanosine(34) in tRNA + 2 S-adenosyl-L-homocysteine + 2 H(+). Methylates the 2'-O-ribose of nucleotides at positions 32 and 34 of the tRNA anticodon loop of substrate tRNAs. This chain is Putative tRNA (cytidine(32)/guanosine(34)-2'-O)-methyltransferase, found in Caenorhabditis elegans.